The chain runs to 122 residues: UPF0102 protein MUL_2060 (122 aa).

Belongs to the UPF0102 family.

The polypeptide is UPF0102 protein MUL_2060 (Mycobacterium ulcerans (strain Agy99)).